The following is a 90-amino-acid chain: Co-chaperonin GroES (90 aa).

The protein belongs to the GroES chaperonin family. In terms of assembly, heptamer of 7 subunits arranged in a ring. Interacts with the chaperonin GroEL.

The protein localises to the cytoplasm. Functionally, together with the chaperonin GroEL, plays an essential role in assisting protein folding. The GroEL-GroES system forms a nano-cage that allows encapsulation of the non-native substrate proteins and provides a physical environment optimized to promote and accelerate protein folding. GroES binds to the apical surface of the GroEL ring, thereby capping the opening of the GroEL channel. The protein is Co-chaperonin GroES of Thermosipho africanus (strain TCF52B).